We begin with the raw amino-acid sequence, 235 residues long: Large ribosomal subunit protein uL1 (235 aa).

It belongs to the universal ribosomal protein uL1 family. As to quaternary structure, part of the 50S ribosomal subunit.

Its function is as follows. Binds directly to 23S rRNA. The L1 stalk is quite mobile in the ribosome, and is involved in E site tRNA release. Protein L1 is also a translational repressor protein, it controls the translation of the L11 operon by binding to its mRNA. This chain is Large ribosomal subunit protein uL1, found in Mycobacteroides abscessus (strain ATCC 19977 / DSM 44196 / CCUG 20993 / CIP 104536 / JCM 13569 / NCTC 13031 / TMC 1543 / L948) (Mycobacterium abscessus).